The primary structure comprises 315 residues: Small ribosomal subunit biogenesis GTPase RsgA (315 aa).

Residues 80–241 (LSKQTHIIAS…IIDTPGIKGF (162 aa)) enclose the CP-type G domain. GTP contacts are provided by residues 129 to 132 (NKVD) and 183 to 191 (GHSGTGKST). Cysteine 265, cysteine 270, histidine 272, and cysteine 278 together coordinate Zn(2+).

The protein belongs to the TRAFAC class YlqF/YawG GTPase family. RsgA subfamily. As to quaternary structure, monomer. Associates with 30S ribosomal subunit, binds 16S rRNA. Zn(2+) is required as a cofactor.

Its subcellular location is the cytoplasm. Functionally, one of several proteins that assist in the late maturation steps of the functional core of the 30S ribosomal subunit. Helps release RbfA from mature subunits. May play a role in the assembly of ribosomal proteins into the subunit. Circularly permuted GTPase that catalyzes slow GTP hydrolysis, GTPase activity is stimulated by the 30S ribosomal subunit. This is Small ribosomal subunit biogenesis GTPase RsgA from Christiangramia forsetii (strain DSM 17595 / CGMCC 1.15422 / KT0803) (Gramella forsetii).